The following is a 156-amino-acid chain: Endoribonuclease YbeY (156 aa).

Zn(2+) contacts are provided by His105, His109, and Asp115.

It belongs to the endoribonuclease YbeY family. The cofactor is Zn(2+).

Its subcellular location is the cytoplasm. Single strand-specific metallo-endoribonuclease involved in late-stage 70S ribosome quality control and in maturation of the 3' terminus of the 16S rRNA. This is Endoribonuclease YbeY from Chlorobium chlorochromatii (strain CaD3).